The following is a 508-amino-acid chain: Probable malate:quinone oxidoreductase (508 aa).

It belongs to the MQO family. The cofactor is FAD.

The catalysed reaction is (S)-malate + a quinone = a quinol + oxaloacetate. The protein operates within carbohydrate metabolism; tricarboxylic acid cycle; oxaloacetate from (S)-malate (quinone route): step 1/1. In Chromohalobacter salexigens (strain ATCC BAA-138 / DSM 3043 / CIP 106854 / NCIMB 13768 / 1H11), this protein is Probable malate:quinone oxidoreductase.